The chain runs to 294 residues: tRNA dimethylallyltransferase (294 aa).

ATP is bound at residue 10-17; the sequence is GPTAVGKT. 12-17 contacts substrate; sequence TAVGKT. The tract at residues 35–38 is interaction with substrate tRNA; the sequence is DSQQ.

Belongs to the IPP transferase family. As to quaternary structure, monomer. The cofactor is Mg(2+).

It carries out the reaction adenosine(37) in tRNA + dimethylallyl diphosphate = N(6)-dimethylallyladenosine(37) in tRNA + diphosphate. Functionally, catalyzes the transfer of a dimethylallyl group onto the adenine at position 37 in tRNAs that read codons beginning with uridine, leading to the formation of N6-(dimethylallyl)adenosine (i(6)A). The sequence is that of tRNA dimethylallyltransferase from Streptococcus pneumoniae (strain P1031).